The sequence spans 112 residues: MKSKLSILMIGFALSVLLAACGSNDAKEEKTDTGSKTEATASEGEELYQQSCVGCHGKDLEGVSGPNLQEVGGKYDEHKIESIIKNGRGNMPKGLVDDNEAAVIAKWLSEKK.

The N-terminal stretch at 1-20 (MKSKLSILMIGFALSVLLAA) is a signal peptide. Cys21 carries the N-palmitoyl cysteine lipid modification. Cys21 is lipidated: S-diacylglycerol cysteine. A compositionally biased stretch (basic and acidic residues) spans 25–35 (DAKEEKTDTGS). A disordered region spans residues 25–44 (DAKEEKTDTGSKTEATASEG). Residues 39–112 (ATASEGEELY…VIAKWLSEKK (74 aa)) enclose the Cytochrome c domain. Heme c-binding residues include Cys52, Cys55, His56, and Met91.

Post-translationally, binds 1 heme c group covalently per subunit.

Its subcellular location is the cell membrane. Electron carrier protein. This is Cytochrome c-551 (cccB) from Bacillus subtilis (strain 168).